Here is a 662-residue protein sequence, read N- to C-terminus: Polyunsaturated fatty acid lipoxygenase ALOX15 (662 aa).

Residues 2–114 enclose the PLAT domain; the sequence is GLYRIRVSTG…VLSLPEGTGR (113 aa). The Lipoxygenase domain maps to 115–662; the sequence is TVGEDPQGLF…PSVVENSVAI (548 aa). The Fe cation site is built by histidine 360, histidine 365, histidine 540, histidine 544, and isoleucine 662.

It belongs to the lipoxygenase family. In terms of assembly, interacts with PEBP1; in response to IL13/interleukin-13, prevents the interaction of PEBP1 with RAF1 to activate the ERK signaling cascade. Requires Fe cation as cofactor. In terms of tissue distribution, detected in monocytes and eosinophils (at protein level). Expressed in airway epithelial cells.

It is found in the cytoplasm. The protein resides in the cytosol. The protein localises to the cell membrane. It localises to the lipid droplet. It catalyses the reaction (5Z,8Z,11Z,14Z)-eicosatetraenoate + O2 = (12S)-hydroperoxy-(5Z,8Z,10E,14Z)-eicosatetraenoate. The catalysed reaction is (5Z,8Z,11Z,14Z)-eicosatetraenoate + O2 = (15S)-hydroperoxy-(5Z,8Z,11Z,13E)-eicosatetraenoate. The enzyme catalyses (9Z,12Z)-octadecadienoate + O2 = (13S)-hydroperoxy-(9Z,11E)-octadecadienoate. It carries out the reaction (5Z,8Z,11Z,14Z)-eicosatetraenoate + 2 O2 = (14R,15S)-dihydroperoxy-(5Z,8Z,10E,12E)-eicosatetraenoate. It catalyses the reaction (5Z,8Z,11Z,14Z)-eicosatetraenoate + 2 O2 = (8S,15S)-dihydroperoxy-(5Z,9E,11Z,13E)-eicosatetraenoate. The catalysed reaction is (14S,15R)-epoxy-(5Z,8Z,11Z)-eicosatrienoate + O2 = (8S)-hydroperoxy-(14S,15R)-epoxy-(5Z,9E,11Z)-eicosatrienoate. The enzyme catalyses (14S,15R)-epoxy-(5Z,8Z,11Z)-eicosatrienoate + O2 = (12S)-hydroperoxy-(14S,15R)-epoxy-(5Z,8Z,10E)-eicosatrienoate. It carries out the reaction (14R,15S)-epoxy-(5Z,8Z,11Z)-eicosatrienoate + O2 = (5S)-hydroperoxy-(14R,15S)-epoxy-(6E,8Z,11Z)-eicosatrienoate. It catalyses the reaction (14R,15S)-epoxy-(5Z,8Z,11Z)-eicosatrienoate + O2 = (12S)-hydroperoxy-(14R,15S)-epoxy-(5Z,8Z,10E)-eicosatrienoate. The catalysed reaction is (15R)-hydroperoxy-(5Z,8Z,11Z,13E)-eicosatetraenoate = 15-oxo-(5Z,8Z,11Z,13E)-eicosatetraenoate + H2O. The enzyme catalyses (15S)-hydroperoxy-(5Z,8Z,11Z,13E)-eicosatetraenoate = (14S,15S)-epoxy-(5Z,8Z,10E,12E)-eicosatetraenoate + H2O. It carries out the reaction (12S)-hydroperoxy-(5Z,8Z,10E,14Z)-eicosatetraenoate = (8S)-hydroxy-(11S,12S)-epoxy-(5Z,9E,14Z)-eicosatrienoate. It catalyses the reaction (4Z,7Z,10Z,13Z,16Z,19Z)-docosahexaenoate + O2 = (14S)-hydroperoxy-(4Z,7Z,10Z,12E,16Z,19Z)-docosahexaenoate. The catalysed reaction is (4Z,7Z,10Z,13Z,16Z,19Z)-docosahexaenoate + O2 = (17S)-hydroperoxy-(4Z,7Z,10Z,13Z,15E,19Z)-docosahexaenoate. The enzyme catalyses (7S)-hydroperoxy-(4Z,8E,10Z,13Z,16Z,19Z)-docosahexaenoate + O2 = (7S,14S)-dihydroperoxy-(4Z,8E,10Z,12E,16Z,19Z)-docosahexaenoate. It carries out the reaction (7S)-hydroperoxy-(4Z,8E,10Z,13Z,16Z,19Z)-docosahexaenoate + O2 = (7S,17S)-dihydroperoxy-(4Z,8E,10Z,13Z,15E,19Z)-docosahexaenoate. It catalyses the reaction (4Z,7Z,10Z,13Z,16Z,19Z)-docosahexaenoate + O2 = (11S)-hydroperoxy-(4Z,7Z,9E,13Z,16Z,19Z)-docosahexaenoate. The catalysed reaction is (7Z,10Z,13Z,16Z,19Z)-docosapentaenoate + O2 = 14-hydroperoxy-(7Z,10Z,12E,16Z,19Z)-docosapentaenoate. The enzyme catalyses (4Z,7Z,10Z,13Z,16Z)-docosapentaenoate + O2 = 14-hydroperoxy-(4Z,7Z,10Z,12E,16Z)-docosapentaenoate. It carries out the reaction N-(5Z,8Z,11Z,14Z)-eicosatetraenoyl-taurine + O2 = N-(12S)-hydroperoxy-(5Z,8Z,10E,14Z)-eicosatetraenoyl-taurine. It catalyses the reaction N-(5Z,8Z,11Z,14Z)-eicosatetraenoyl-gamma-aminobutanoate + O2 = N-(12S)-hydroperoxy-(5Z,8Z,10E,14Z)-eicosatetraenoyl-gamma-aminobutanoate. The catalysed reaction is N-(5Z,8Z,11Z,14Z)-eicosatetraenoyl-glycine + O2 = N-(12S)-hydroperoxy-(5Z,8Z,10E,14Z)-eicosatetraenoyl-glycine. The enzyme catalyses N-(5Z,8Z,11Z,14Z)-eicosatetraenoyl-L-alanine + O2 = N-(12S)-hydroperoxy-(5Z,8Z,10E,14Z)-eicosatetraenoyl-alanine. It carries out the reaction N-(5Z,8Z,11Z,14Z)-eicosatetraenoyl-taurine + O2 = N-(15S)-hydroperoxy-(5Z,8Z,11Z,13E)-eicosatetraenoyl-taurine. It catalyses the reaction N-(5Z,8Z,11Z,14Z)-eicosatetraenoyl-gamma-aminobutanoate + O2 = N-(15S)-hydroperoxy-(5Z,8Z,11Z,13E)-eicosatetraenoyl-gamma-aminobutanoate. The catalysed reaction is N-(5Z,8Z,11Z,14Z)-eicosatetraenoyl-glycine + O2 = N-(15S)-hydroperoxy-(5Z,8Z,11Z,13E)-eicosatetraenoyl-glycine. The enzyme catalyses N-(5Z,8Z,11Z,14Z)-eicosatetraenoyl-L-alanine + O2 = N-(15S)-hydroperoxy-(5Z,8Z,11Z,13E)-eicosatetraenoyl-alanine. Its pathway is lipid metabolism; hydroperoxy eicosatetraenoic acid biosynthesis. With respect to regulation, activity is increased by binding phosphatidylinositol phosphates, especially phosphatidylinositol 3,4-bisphosphate and phosphatidylinositol 4,5-bisphosphate. Inactivated at 37 degrees Celsius by (13S)-hydroperoxy-(9Z,11E)-octadecadienoate. Its function is as follows. Non-heme iron-containing dioxygenase that catalyzes the stereo-specific peroxidation of free and esterified polyunsaturated fatty acids generating a spectrum of bioactive lipid mediators. It inserts peroxyl groups at C12 or C15 of arachidonate ((5Z,8Z,11Z,14Z)-eicosatetraenoate) producing both 12-hydroperoxyeicosatetraenoate/12-HPETE and 15-hydroperoxyeicosatetraenoate/15-HPETE. It may then act on 12-HPETE to produce hepoxilins, which may show pro-inflammatory properties. Can also peroxidize linoleate ((9Z,12Z)-octadecadienoate) to 13-hydroperoxyoctadecadienoate/13-HPODE. May participate in the sequential oxidations of DHA ((4Z,7Z,10Z,13Z,16Z,19Z)-docosahexaenoate) to generate specialized pro-resolving mediators (SPMs)like resolvin D5 ((7S,17S)-diHPDHA) and (7S,14S)-diHPDHA, that actively down-regulate the immune response and have anti-aggregation properties with platelets. Can convert epoxy fatty acids to hydroperoxy-epoxides derivatives followed by an intramolecular nucleophilic substitution leading to the formation of monocyclic endoperoxides. Plays an important role during the maintenance of self-tolerance by peroxidizing membrane-bound phosphatidylethanolamine which can then signal the sorting process for clearance of apoptotic cells during inflammation and prevent an autoimmune response. In addition to its role in the immune and inflammatory responses, this enzyme may play a role in epithelial wound healing in the cornea through production of lipoxin A4 (LXA(4)) and docosahexaenoic acid-derived neuroprotectin D1 (NPD1; 10R,17S-HDHA), both lipid autacoids exhibit anti-inflammatory and neuroprotective properties. Furthermore, it may regulate actin polymerization which is crucial for several biological processes such as the phagocytosis of apoptotic cells. It is also implicated in the generation of endogenous ligands for peroxisome proliferator activated receptor (PPAR-gamma), hence modulating macrophage development and function. It may also exert a negative effect on skeletal development by regulating bone mass through this pathway. As well as participates in ER stress and downstream inflammation in adipocytes, pancreatic islets, and liver. Finally, it is also involved in the cellular response to IL13/interleukin-13. This is Polyunsaturated fatty acid lipoxygenase ALOX15 from Homo sapiens (Human).